A 193-amino-acid polypeptide reads, in one-letter code: ATP-dependent Clp protease proteolytic subunit 1 (193 aa).

Catalysis depends on Ser98, which acts as the Nucleophile. His123 is an active-site residue.

The protein belongs to the peptidase S14 family. In terms of assembly, fourteen ClpP subunits assemble into 2 heptameric rings which stack back to back to give a disk-like structure with a central cavity, resembling the structure of eukaryotic proteasomes.

Its subcellular location is the cytoplasm. It catalyses the reaction Hydrolysis of proteins to small peptides in the presence of ATP and magnesium. alpha-casein is the usual test substrate. In the absence of ATP, only oligopeptides shorter than five residues are hydrolyzed (such as succinyl-Leu-Tyr-|-NHMec, and Leu-Tyr-Leu-|-Tyr-Trp, in which cleavage of the -Tyr-|-Leu- and -Tyr-|-Trp bonds also occurs).. Its function is as follows. Cleaves peptides in various proteins in a process that requires ATP hydrolysis. Has a chymotrypsin-like activity. Plays a major role in the degradation of misfolded proteins. The chain is ATP-dependent Clp protease proteolytic subunit 1 from Bacillus anthracis.